Consider the following 234-residue polypeptide: 1-(5-phosphoribosyl)-5-[(5-phosphoribosylamino)methylideneamino] imidazole-4-carboxamide isomerase (234 aa).

Residue D9 is the Proton acceptor of the active site. D131 serves as the catalytic Proton donor.

The protein belongs to the HisA/HisF family.

The protein resides in the cytoplasm. It catalyses the reaction 1-(5-phospho-beta-D-ribosyl)-5-[(5-phospho-beta-D-ribosylamino)methylideneamino]imidazole-4-carboxamide = 5-[(5-phospho-1-deoxy-D-ribulos-1-ylimino)methylamino]-1-(5-phospho-beta-D-ribosyl)imidazole-4-carboxamide. The protein operates within amino-acid biosynthesis; L-histidine biosynthesis; L-histidine from 5-phospho-alpha-D-ribose 1-diphosphate: step 4/9. This is 1-(5-phosphoribosyl)-5-[(5-phosphoribosylamino)methylideneamino] imidazole-4-carboxamide isomerase from Staphylococcus aureus (strain MRSA252).